Here is a 199-residue protein sequence, read N- to C-terminus: N-(5'-phosphoribosyl)anthranilate isomerase (199 aa).

It belongs to the TrpF family.

The enzyme catalyses N-(5-phospho-beta-D-ribosyl)anthranilate = 1-(2-carboxyphenylamino)-1-deoxy-D-ribulose 5-phosphate. Its pathway is amino-acid biosynthesis; L-tryptophan biosynthesis; L-tryptophan from chorismate: step 3/5. This chain is N-(5'-phosphoribosyl)anthranilate isomerase, found in Lacticaseibacillus casei (strain BL23) (Lactobacillus casei).